The chain runs to 879 residues: DNA replication licensing factor mcm3 (879 aa).

In terms of domain architecture, MCM spans 306 to 513 (VFELLSTSLA…KDRALSEHVL (208 aa)). 356-363 (GDPSTAKS) contacts ATP. The Arginine finger motif lies at 488 to 491 (SRFD). The tract at residues 679–778 (RKKHKKQRLE…STLPATSREL (100 aa)) is disordered. Over residues 690–713 (GEEFDSEDDNSDDMDIEESEEEMD) the composition is skewed to acidic residues. The span at 732-752 (TSQSQESGSEIGSSIAGTAGS) shows a compositional bias: low complexity. Polar residues predominate over residues 754–778 (NVGTSNTQLSWPSTHSTLPATSREL).

This sequence belongs to the MCM family. As to quaternary structure, component of the mcm2-7 complex. The complex forms a toroidal hexameric ring with the proposed subunit order mcm2-mcm6-mcm4-mcm7-mcm3-mcm5. The heterodimers of mcm4/mcm6 and mcm3/mcm5 interact with mcm2 and mcm7.

It is found in the nucleus. The catalysed reaction is ATP + H2O = ADP + phosphate + H(+). Its function is as follows. Acts as a component of the mcm2-7 complex (mcm complex) which is the putative replicative helicase essential for 'once per cell cycle' DNA replication initiation and elongation in eukaryotic cells. The active ATPase sites in the mcm2-7 ring are formed through the interaction surfaces of two neighboring subunits such that a critical structure of a conserved arginine finger motif is provided in trans relative to the ATP-binding site of the Walker A box of the adjacent subunit. The six ATPase active sites, however, are likely to contribute differentially to the complex helicase activity. The polypeptide is DNA replication licensing factor mcm3 (mcm3) (Schizosaccharomyces pombe (strain 972 / ATCC 24843) (Fission yeast)).